A 483-amino-acid polypeptide reads, in one-letter code: ATP-dependent RNA helicase DDX25 (483 aa).

A Nuclear export signal motif is present at residues 61–74; that stretch reads LAANSLLNKLIHQS. The Q motif motif lies at 97 to 125; that stretch reads KTFEELRLKEELLKGIYAMGFNRPSKIQE. The Nuclear localization signal signature appears at 100–114; sequence EELRLKEELLKGIYA. A Helicase ATP-binding domain is found at 130–300; sequence MMLAHPPQNL…ERIIPDPNVI (171 aa). Position 143–150 (143–150) interacts with ATP; sequence SQSGTGKT. A DEAD box motif is present at residues 247-250; that stretch reads DEAD. The Helicase C-terminal domain occupies 311-478; it reads NIRQYYVLCE…QLNAEDMDEI (168 aa).

Belongs to the DEAD box helicase family. Phosphorylated on threonine residues. The phosphorylated form is found in the cytoplasm but not in the nucleus. Highly expressed in the Leydig and germ cells of the testis and weakly expressed in the pituitary and hypothalamus.

Its subcellular location is the cytoplasm. The protein localises to the nucleus. The enzyme catalyses ATP + H2O = ADP + phosphate + H(+). ATP-dependent RNA helicase. Required for mRNA export and translation regulation during spermatid development. This is ATP-dependent RNA helicase DDX25 (DDX25) from Homo sapiens (Human).